The sequence spans 78 residues: RNA-binding protein Hfq (78 aa).

The Sm domain occupies 10-69 (DPFLNTLRKEHVPVSIYLVNGIKLQGQIESFDQYVVLLRNTVTQMVYKHAISTVVPARAV).

This sequence belongs to the Hfq family. Homohexamer.

In terms of biological role, RNA chaperone that binds small regulatory RNA (sRNAs) and mRNAs to facilitate mRNA translational regulation in response to envelope stress, environmental stress and changes in metabolite concentrations. Also binds with high specificity to tRNAs. This Bordetella bronchiseptica (strain ATCC BAA-588 / NCTC 13252 / RB50) (Alcaligenes bronchisepticus) protein is RNA-binding protein Hfq.